Here is a 489-residue protein sequence, read N- to C-terminus: MEAADYEVLSVREQLFHDRVRECIISILLFATLYILCHIFLTRFKKPAEFTTVDDEDATVNKIALELCTFTLAVALGAVLLLPFSIISNEVLLSLPRNYYIQWLNGSLIHGLWNLVFLFSNLSLVFLMPFAYFFTESEGFAGSRKGVLGRVYETVVMLILLTLLVLGMVWVASAIVDNDKASRESLYDFWEYYLPYLYSCISFLGVLLLLVCTPLGLARMFSVTGKLLVKPRLLEDLEEQLNCSAFEEAALTRRICNPTSCWLPLDMELLHRQVLALQAQRVLLEKRRKASAWQRNLGYPLAMLCLLVLTGLSVLIVAVHILELLIDEAAMPRGMQDAALGQASFSKLGSFGAIIQVVLIFYLMVSSVVGFYSSPLFGSLRPRWHDTSMTQIIGNCVCLLVLSSALPVFSRTLGLTRFDLLGDFGRFNWLGNFYIVFLYNAAFAGLTTLCLVKTFTAAVRAELIRAFGLDRLPLPVSGFPRASRKKQHQ.

Residues 1 to 21 are Extracellular-facing; the sequence is MEAADYEVLSVREQLFHDRVR. The tract at residues 1–59 is interaction with LGB; that stretch reads MEAADYEVLSVREQLFHDRVRECIISILLFATLYILCHIFLTRFKKPAEFTTVDDEDAT. The segment at 1–76 is LCN1-binding; that stretch reads MEAADYEVLS…LCTFTLAVAL (76 aa). The chain crosses the membrane as a helical span at residues 22–42; the sequence is ECIISILLFATLYILCHIFLT. At 43–66 the chain is on the cytoplasmic side; the sequence is RFKKPAEFTTVDDEDATVNKIALE. A helical transmembrane segment spans residues 67–87; the sequence is LCTFTLAVALGAVLLLPFSII. The Extracellular segment spans residues 88–114; that stretch reads SNEVLLSLPRNYYIQWLNGSLIHGLWN. A helical membrane pass occupies residues 115-135; it reads LVFLFSNLSLVFLMPFAYFFT. Residues 136-154 are Cytoplasmic-facing; sequence ESEGFAGSRKGVLGRVYET. Residues 155 to 175 form a helical membrane-spanning segment; sequence VVMLILLTLLVLGMVWVASAI. Over 176 to 196 the chain is Extracellular; it reads VDNDKASRESLYDFWEYYLPY. The helical transmembrane segment at 197–217 threads the bilayer; the sequence is LYSCISFLGVLLLLVCTPLGL. At 218-305 the chain is on the cytoplasmic side; sequence ARMFSVTGKL…NLGYPLAMLC (88 aa). The chain crosses the membrane as a helical span at residues 306–326; the sequence is LLVLTGLSVLIVAVHILELLI. Topologically, residues 327–350 are extracellular; sequence DEAAMPRGMQDAALGQASFSKLGS. Residues 351–371 traverse the membrane as a helical segment; sequence FGAIIQVVLIFYLMVSSVVGF. Topologically, residues 372–388 are cytoplasmic; the sequence is YSSPLFGSLRPRWHDTS. A helical transmembrane segment spans residues 389 to 409; it reads MTQIIGNCVCLLVLSSALPVF. The Extracellular portion of the chain corresponds to 410 to 431; it reads SRTLGLTRFDLLGDFGRFNWLG. The helical transmembrane segment at 432 to 452 threads the bilayer; it reads NFYIVFLYNAAFAGLTTLCLV. Over 453-489 the chain is Cytoplasmic; sequence KTFTAAVRAELIRAFGLDRLPLPVSGFPRASRKKQHQ.

Belongs to the LIMR family. Dimer. Can also form higher oligomers. Interacts with LCN1; this interaction mediates the endocytosis of LCN1. Interacts with UBAC2, FAF2, VCP, AMFR, ZNRF3, CTNNB1, LRP6, GSK3B, FZD6, DVL2 and RNF43. Interacts with GSK3A. Interaction with LGB and SCGB1A1 is controversial. In terms of tissue distribution, highly expressed in the bone marrow, thymus, spleen and lymphocytes.

It is found in the cell membrane. The protein localises to the endoplasmic reticulum membrane. Its function is as follows. Plays an essential role in lymphocyte development by negatively regulating the canonical Wnt signaling pathway. In association with UBAC2 and E3 ubiquitin-protein ligase AMFR, promotes the ubiquitin-mediated degradation of CTNNB1 and Wnt receptors FZD6 and LRP6. LMBR1L stabilizes the beta-catenin destruction complex that is required for regulating CTNNB1 levels. Acts as a LCN1 receptor and can mediate its endocytosis. The sequence is that of Protein LMBR1L (Lmbr1l) from Mus musculus (Mouse).